The following is a 316-amino-acid chain: Peroxidase 31 (316 aa).

A signal peptide spans 1-19 (MASLKSLFLLFLFFFTAQS). 4 cysteine pairs are disulfide-bonded: Cys-30–Cys-111, Cys-63–Cys-68, Cys-117–Cys-312, and Cys-196–Cys-222. His-61 (proton acceptor) is an active-site residue. Positions 62, 67, 69, and 71 each coordinate Ca(2+). Pro-159 is a binding site for substrate. His-189 serves as a coordination point for heme b. Position 190 (Ser-190) interacts with Ca(2+). Residue Asn-206 is glycosylated (N-linked (GlcNAc...) asparagine). Ca(2+) contacts are provided by Asp-236, Thr-239, and Asp-244.

The protein belongs to the peroxidase family. Classical plant (class III) peroxidase subfamily. The cofactor is heme b. It depends on Ca(2+) as a cofactor.

Its subcellular location is the secreted. It catalyses the reaction 2 a phenolic donor + H2O2 = 2 a phenolic radical donor + 2 H2O. Removal of H(2)O(2), oxidation of toxic reductants, biosynthesis and degradation of lignin, suberization, auxin catabolism, response to environmental stresses such as wounding, pathogen attack and oxidative stress. These functions might be dependent on each isozyme/isoform in each plant tissue. This chain is Peroxidase 31 (PER31), found in Arabidopsis thaliana (Mouse-ear cress).